The primary structure comprises 89 residues: Small ribosomal subunit protein uS15 (89 aa).

A compositionally biased stretch (basic and acidic residues) spans 1–21 (MAITQERKNQLISEFKTHESD). The disordered stretch occupies residues 1–23 (MAITQERKNQLISEFKTHESDTG).

Belongs to the universal ribosomal protein uS15 family. In terms of assembly, part of the 30S ribosomal subunit. Forms a bridge to the 50S subunit in the 70S ribosome, contacting the 23S rRNA.

Its function is as follows. One of the primary rRNA binding proteins, it binds directly to 16S rRNA where it helps nucleate assembly of the platform of the 30S subunit by binding and bridging several RNA helices of the 16S rRNA. In terms of biological role, forms an intersubunit bridge (bridge B4) with the 23S rRNA of the 50S subunit in the ribosome. This Bacillus velezensis (strain DSM 23117 / BGSC 10A6 / LMG 26770 / FZB42) (Bacillus amyloliquefaciens subsp. plantarum) protein is Small ribosomal subunit protein uS15.